The sequence spans 294 residues: MPFIKAVKSSPYFSRYQTKYRRRREGKTDYYARKRLIAQAKNKYNAPKYRLVVRFSNRFVTCQIVSSRVNGDYVLAHAHSSELPRYGIKWGLANWTAAYATGLLVARRALAKVGLADKYEGVTEPEGEFELTEAIEDGPRPFKVFLDVGLKRTSTGSRVFGAMKGASDGGLFIPHSPNRFPGFDIETEELDDETLRKYIYGGHVAEYMEMLIDDDEERYQKQFSGLIADGIESDQLEDIYAEAYAKIREDPSFQKSGKDAAAFKAESLKHTQRKLTAEERKERFNAKVIEAGRA.

At Ser-10 the chain carries Phosphoserine. Tyr-12 carries the phosphotyrosine modification. Phosphoserine is present on Ser-81.

The protein belongs to the universal ribosomal protein uL18 family. In terms of assembly, component of the large ribosomal subunit (LSU). Mature yeast ribosomes consist of a small (40S) and a large (60S) subunit. The 40S small subunit contains 1 molecule of ribosomal RNA (18S rRNA) and 33 different proteins (encoded by 57 genes). The large 60S subunit contains 3 rRNA molecules (25S, 5.8S and 5S rRNA) and 46 different proteins (encoded by 81 genes). Component of a hexameric 5S RNP precursor complex, composed of 5S RNA, rrs1, rpf2, rpl5a/rpl5b, rpl11a/rpl11b and syo1; this complex acts as a precursor for ribosome assembly. rpl5a/rpl5b/uL18 forms a heterotrimeric complex with syo1 and rpl11a/rpl11b/uL5. Interaction of this complex with KAP104 allows the nuclear import of the heterotrimer.

It localises to the cytoplasm. Its subcellular location is the nucleus. Functionally, component of the ribosome, a large ribonucleoprotein complex responsible for the synthesis of proteins in the cell. The small ribosomal subunit (SSU) binds messenger RNAs (mRNAs) and translates the encoded message by selecting cognate aminoacyl-transfer RNA (tRNA) molecules. The large subunit (LSU) contains the ribosomal catalytic site termed the peptidyl transferase center (PTC), which catalyzes the formation of peptide bonds, thereby polymerizing the amino acids delivered by tRNAs into a polypeptide chain. The nascent polypeptides leave the ribosome through a tunnel in the LSU and interact with protein factors that function in enzymatic processing, targeting, and the membrane insertion of nascent chains at the exit of the ribosomal tunnel. The chain is Large ribosomal subunit protein uL18A (rpl501) from Schizosaccharomyces pombe (strain 972 / ATCC 24843) (Fission yeast).